The following is a 301-amino-acid chain: Phosducin-like protein (301 aa).

Position 2 is an N-acetylthreonine (T2). The tract at residues 17 to 60 (YSTSEDEDSDHEDKDRGRGAPAISSTPAEAELAGEGISINTGPK) is disordered. S20, S25, S226, S293, and S296 each carry phosphoserine. Positions 36-299 (APAISSTPAE…TCHSEDSDLE (264 aa)) constitute a Phosducin domain. Positions 158 to 301 (FKQVFEIPSG…HSEDSDLEID (144 aa)) are thioredoxin fold.

The protein belongs to the phosducin family. In terms of assembly, forms a complex with the beta and gamma subunits of the GTP-binding protein, transducin. Interacts with the CCT chaperonin complex.

It is found in the cell projection. The protein resides in the cilium. Functions as a co-chaperone for CCT in the assembly of heterotrimeric G protein complexes, facilitates the assembly of both Gbeta-Ggamma and RGS-Gbeta5 heterodimers. Also acts as a positive regulator of hedgehog signaling and regulates ciliary function. The polypeptide is Phosducin-like protein (Pdcl) (Mus musculus (Mouse)).